The chain runs to 442 residues: GPI mannosyltransferase 1 (442 aa).

8 helical membrane-spanning segments follow: residues Ile22–Phe42, Ile95–Tyr115, Leu177–Ile197, Ala242–Phe262, Met307–Val327, Leu336–Ile356, Ile361–Ala381, and Ile408–Leu428.

Belongs to the PIGM family.

It is found in the endoplasmic reticulum membrane. Its pathway is glycolipid biosynthesis; glycosylphosphatidylinositol-anchor biosynthesis. Its function is as follows. Mannosyltransferase involved in glycosylphosphatidylinositol-anchor biosynthesis. Transfers the first alpha-1,4-mannose to GlcN-acyl-PI during GPI precursor assembly. This chain is GPI mannosyltransferase 1 (pigm), found in Dictyostelium discoideum (Social amoeba).